The sequence spans 315 residues: Ribosomal RNA small subunit methyltransferase H (315 aa).

Residues 37–39, Asp-57, Phe-83, Asp-105, and Gln-112 each bind S-adenosyl-L-methionine; that span reads GGH.

Belongs to the methyltransferase superfamily. RsmH family.

The protein resides in the cytoplasm. It carries out the reaction cytidine(1402) in 16S rRNA + S-adenosyl-L-methionine = N(4)-methylcytidine(1402) in 16S rRNA + S-adenosyl-L-homocysteine + H(+). Its function is as follows. Specifically methylates the N4 position of cytidine in position 1402 (C1402) of 16S rRNA. In Pseudomonas fluorescens (strain SBW25), this protein is Ribosomal RNA small subunit methyltransferase H.